The following is a 369-amino-acid chain: S-(hydroxymethyl)glutathione dehydrogenase (369 aa).

The Zn(2+) site is built by Cys40, His62, Cys92, Cys95, Cys98, Cys106, and Cys169.

This sequence belongs to the zinc-containing alcohol dehydrogenase family. Class-III subfamily. As to quaternary structure, homodimer. It depends on Zn(2+) as a cofactor.

Its subcellular location is the cytoplasm. It catalyses the reaction S-(hydroxymethyl)glutathione + NADP(+) = S-formylglutathione + NADPH + H(+). The enzyme catalyses S-(hydroxymethyl)glutathione + NAD(+) = S-formylglutathione + NADH + H(+). It carries out the reaction a primary alcohol + NAD(+) = an aldehyde + NADH + H(+). The catalysed reaction is a secondary alcohol + NAD(+) = a ketone + NADH + H(+). It catalyses the reaction S-nitrosoglutathione + NADH + H(+) = S-(hydroxysulfenamide)glutathione + NAD(+). Has high formaldehyde dehydrogenase activity in the presence of glutathione and catalyzes the oxidation of normal alcohols in a reaction that is not GSH-dependent. In addition, hemithiolacetals other than those formed from GSH, including omega-thiol fatty acids, also are substrates. Also acts as a S-nitroso-glutathione reductase by catalyzing the NADH-dependent reduction of S-nitrosoglutathione. The sequence is that of S-(hydroxymethyl)glutathione dehydrogenase (frmA) from Synechocystis sp. (strain ATCC 27184 / PCC 6803 / Kazusa).